We begin with the raw amino-acid sequence, 294 residues long: Cell division control protein 2 homolog 2 (294 aa).

Residues 4 to 287 (YEKVEKIGEG…ARGALEHEYF (284 aa)) form the Protein kinase domain. ATP-binding positions include 10–18 (IGEGTYGVV) and K33. T14 is subject to Phosphothreonine. Phosphotyrosine is present on Y15. The active-site Proton acceptor is D127. T161 carries the phosphothreonine; by CAK modification.

Belongs to the protein kinase superfamily. CMGC Ser/Thr protein kinase family. CDC2/CDKX subfamily. In terms of tissue distribution, found in most organs including root, young leaf, stem, vegetative meristem and flower bud.

It carries out the reaction L-seryl-[protein] + ATP = O-phospho-L-seryl-[protein] + ADP + H(+). The enzyme catalyses L-threonyl-[protein] + ATP = O-phospho-L-threonyl-[protein] + ADP + H(+). With respect to regulation, phosphorylation at Thr-14 or Tyr-15 inactivates the enzyme, while phosphorylation at Thr-161 activates it. Its function is as follows. Plays a key role in the control of the eukaryotic cell cycle. Component of the kinase complex that phosphorylates the repetitive C-terminus of RNA polymerase II. In Medicago sativa (Alfalfa), this protein is Cell division control protein 2 homolog 2 (CDC2B).